Here is a 204-residue protein sequence, read N- to C-terminus: High mobility group-T protein (204 aa).

2 consecutive DNA-binding regions (HMG box) follow at residues 8–78 (PRGK…RSYI) and 94–162 (PKRP…TAYR). The segment at 162-204 (RNKGKVPVSMPAKAAAPAKDDDDDDDDDDDDEDDDDDDDEDDE) is disordered. The segment covering 181 to 204 (DDDDDDDDDDDDEDDDDDDDEDDE) has biased composition (acidic residues).

It belongs to the HMGB family.

It is found in the nucleus. It localises to the chromosome. In terms of biological role, binds preferentially single-stranded DNA and unwinds double-stranded DNA. The protein is High mobility group-T protein of Oncorhynchus mykiss (Rainbow trout).